The primary structure comprises 171 residues: Early E1A protein (171 aa).

An interaction with RB1 in competition with E2F1 region spans residues 40-48 (PTLHDLFDV). Residues 67–96 (DTDSSASTEGDSGFSPLSTPPVSPIPPHPT) form a disordered region. A compositionally biased stretch (pro residues) spans 84-96 (STPPVSPIPPHPT). Residues 106–110 (LLCLE) carry the LXCXE motif, interaction with host RB1 motif. Residues 145-163 (CLRCAFYQEQDDNALCGLC) fold into a zinc finger. The Nuclear localization signal motif lies at 166–171 (KGPCRR).

The protein belongs to the adenoviridae E1A protein family. As to quaternary structure, interacts with host UBE2I; this interaction interferes with polySUMOylation. Interacts with host RB1; this interaction induces the aberrant dissociation of RB1-E2F1 complex thereby disrupting the activity of RB1 and activating E2F1-regulated genes. Interacts with host ATF7; the interaction enhances ATF7-mediated viral transactivation activity which requires the zinc binding domains of both proteins. Isoform early E1A 32 kDa protein and isoform early E1A 26 kDa protein interact (via N-terminus) with CUL1 and E3 ubiquitin ligase RBX1; these interactions inhibit RBX1-CUL1-dependent elongation reaction of ubiquitin chains and attenuate ubiquitination of SCF(FBXW7) target proteins. Interacts (via PXLXP motif) with host ZMYND11/BS69 (via MYND-type zinc finger); this interaction inhibits E1A mediated transactivation. Interacts with host EP300; this interaction stimulates the acetylation of RB1 by recruiting EP300 and RB1 into a multimeric-protein complex. Interacts with host CTBP1 and CTBP2; this interaction seems to potentiate viral replication. Interacts with host DCAF7. Interacts with host DYRK1A. Interacts with host KPNA4; this interaction allows E1A import into the host nucleus. Interacts with host EP400; this interaction stabilizes MYC. Interacts with host TBP protein; this interaction probably disrupts the TBP-TATA complex.

The protein resides in the host nucleus. Plays a role in viral genome replication by driving entry of quiescent cells into the cell cycle. Stimulation of progression from G1 to S phase allows the virus to efficiently use the cellular DNA replicating machinery to achieve viral genome replication. E1A protein has both transforming and trans-activating activities. Induces the disassembly of the E2F1 transcription factor from RB1 by direct competition for the same binding site on RB1, with subsequent transcriptional activation of E2F1-regulated S-phase genes and of the E2 region of the adenoviral genome. Release of E2F1 leads to the ARF-mediated inhibition of MDM2 and causes TP53/p53 to accumulate because it is not targeted for degradation by MDM2-mediated ubiquitination anymore. This increase in TP53, in turn, would arrest the cell proliferation and direct its death but this effect is counteracted by the viral protein E1B-55K. Inactivation of the ability of RB1 to arrest the cell cycle is critical for cellular transformation, uncontrolled cellular growth and proliferation induced by viral infection. Interaction with RBX1 and CUL1 inhibits ubiquitination of the proteins targeted by SCF(FBXW7) ubiquitin ligase complex, and may be linked to unregulated host cell proliferation. The tumorigenesis-restraining activity of E1A may be related to the disruption of the host CtBP-CtIP complex through the CtBP binding motif. The protein is Early E1A protein of Canis lupus familiaris (Dog).